We begin with the raw amino-acid sequence, 241 residues long: Carboxy-S-adenosyl-L-methionine synthase (241 aa).

S-adenosyl-L-methionine-binding positions include Tyr38, 63-65 (GCS), 88-89 (DN), 116-117 (DI), Asn131, and Arg198.

It belongs to the class I-like SAM-binding methyltransferase superfamily. Cx-SAM synthase family. Homodimer.

It catalyses the reaction prephenate + S-adenosyl-L-methionine = carboxy-S-adenosyl-L-methionine + 3-phenylpyruvate + H2O. Functionally, catalyzes the conversion of S-adenosyl-L-methionine (SAM) to carboxy-S-adenosyl-L-methionine (Cx-SAM). The protein is Carboxy-S-adenosyl-L-methionine synthase of Histophilus somni (strain 2336) (Haemophilus somnus).